The chain runs to 246 residues: 14-3-3 protein beta/alpha (246 aa).

Residue M1 is modified to N-acetylmethionine. T2 bears the N-acetylthreonine; in 14-3-3 protein beta/alpha, N-terminally processed mark. At T2 the chain carries Phosphothreonine. K5 is subject to N6-acetyllysine. An N6-acetyllysine; alternate modification is found at K51. K51 is covalently cross-linked (Glycyl lysine isopeptide (Lys-Gly) (interchain with G-Cter in SUMO2); alternate). Phosphoserine is present on S60. The residue at position 70 (K70) is an N6-acetyllysine. 3'-nitrotyrosine occurs at positions 84 and 106. Residue K117 is modified to N6-acetyllysine. 2 positions are modified to phosphoserine: S186 and S232.

It belongs to the 14-3-3 family. In terms of assembly, homodimer. Interacts with SAMSN1 and PRKCE. Interacts with AKAP13. Interacts with SSH1 and TORC2/CRTC2. Interacts with ABL1; the interaction results in cytoplasmic location of ABL1 and inhibition of cABL-mediated apoptosis. Interacts with ROR2 (dimer); the interaction results in phosphorylation of YWHAB on tyrosine residues. Interacts with GAB2. Interacts with YAP1 (phosphorylated form). Interacts with the phosphorylated (by AKT1) form of SRPK2. Interacts with PKA-phosphorylated AANAT. Interacts with MYO1C. Interacts with SIRT2. Interacts with the 'Thr-369' phosphorylated form of DAPK2. Interacts with PI4KB, TBC1D22A and TBC1D22B. Interacts with the 'Ser-1134' and 'Ser-1161' phosphorylated form of SOS1. Interacts (via phosphorylated form) with YWHAB; this interaction occurs in a protein kinase AKT1-dependent manner. Interacts with SLITRK1. Interacts with SYNPO2 (phosphorylated form); YWHAB competes with ACTN2 for interaction with SYNPO2. Interacts with RIPOR2 (via phosphorylated form); this interaction occurs in a chemokine-dependent manner and does not compete for binding of RIPOR2 with RHOA nor blocks inhibition of RIPOR2-mediated RHOA activity. Interacts with MARK2 and MARK3. Interacts with TESK1; the interaction is dependent on the phosphorylation of TESK1 'Ser-439' and inhibits TESK1 kinase activity. Interacts with MEFV. Interacts with HDAC4. Interacts with ADAM22 (via C-terminus). The alpha, brain-specific form differs from the beta form in being phosphorylated. Phosphorylated on Ser-60 by protein kinase C delta type catalytic subunit in a sphingosine-dependent fashion.

It is found in the cytoplasm. It localises to the melanosome. Functionally, adapter protein implicated in the regulation of a large spectrum of both general and specialized signaling pathways. Binds to a large number of partners, usually by recognition of a phosphoserine or phosphothreonine motif. Binding generally results in the modulation of the activity of the binding partner. Negative regulator of osteogenesis. Blocks the nuclear translocation of the phosphorylated form (by AKT1) of SRPK2 and antagonizes its stimulatory effect on cyclin D1 expression resulting in blockage of neuronal apoptosis elicited by SRPK2. Negative regulator of signaling cascades that mediate activation of MAP kinases via AKAP13. The polypeptide is 14-3-3 protein beta/alpha (YWHAB) (Bos taurus (Bovine)).